The primary structure comprises 236 residues: UPF0502 protein BceJ2315_62050 (236 aa).

Belongs to the UPF0502 family.

The chain is UPF0502 protein BceJ2315_62050 from Burkholderia cenocepacia (strain ATCC BAA-245 / DSM 16553 / LMG 16656 / NCTC 13227 / J2315 / CF5610) (Burkholderia cepacia (strain J2315)).